Here is a 427-residue protein sequence, read N- to C-terminus: Adenylosuccinate synthetase (427 aa).

Residues 12–18 and 40–42 contribute to the GTP site; these read GDEGKGK and GHT. The Proton acceptor role is filled by Asp-13. Positions 13 and 40 each coordinate Mg(2+). IMP contacts are provided by residues 13 to 16, 38 to 41, Thr-128, Arg-142, Gln-223, Thr-238, and Arg-302; these read DEGK and NAGH. Catalysis depends on His-41, which acts as the Proton donor. 298–304 contributes to the substrate binding site; that stretch reads TTTGRPR. GTP is bound by residues Arg-304, 330 to 332, and 412 to 414; these read KLD and GVG.

It belongs to the adenylosuccinate synthetase family. In terms of assembly, homodimer. Requires Mg(2+) as cofactor.

Its subcellular location is the cytoplasm. It carries out the reaction IMP + L-aspartate + GTP = N(6)-(1,2-dicarboxyethyl)-AMP + GDP + phosphate + 2 H(+). It functions in the pathway purine metabolism; AMP biosynthesis via de novo pathway; AMP from IMP: step 1/2. Its function is as follows. Plays an important role in the de novo pathway of purine nucleotide biosynthesis. Catalyzes the first committed step in the biosynthesis of AMP from IMP. In Pelotomaculum thermopropionicum (strain DSM 13744 / JCM 10971 / SI), this protein is Adenylosuccinate synthetase.